The following is a 216-amino-acid chain: Adenylate kinase (216 aa).

An ATP-binding site is contributed by 10 to 15; that stretch reads GAGKGT. An NMP region spans residues 30–59; sequence STGDMLRAAVNAGTEVGKRAKAVMDAGKLV. AMP is bound by residues Thr-31, Arg-36, 57–59, 85–88, and Gln-92; these read KLV and GFPR. An LID region spans residues 126–163; it reads GRYTCAQCGTVYHDTDKVPVEEGVCDKCGSTHFKRRPD. Arg-127 serves as a coordination point for ATP. 2 residues coordinate Zn(2+): Cys-130 and Cys-133. 136–137 is a binding site for ATP; it reads VY. Residues Cys-150 and Cys-153 each coordinate Zn(2+). Residues Arg-160 and Arg-172 each contribute to the AMP site. Ala-200 provides a ligand contact to ATP.

The protein belongs to the adenylate kinase family. In terms of assembly, monomer.

It localises to the cytoplasm. The catalysed reaction is AMP + ATP = 2 ADP. It participates in purine metabolism; AMP biosynthesis via salvage pathway; AMP from ADP: step 1/1. Catalyzes the reversible transfer of the terminal phosphate group between ATP and AMP. Plays an important role in cellular energy homeostasis and in adenine nucleotide metabolism. This is Adenylate kinase from Rhizobium etli (strain ATCC 51251 / DSM 11541 / JCM 21823 / NBRC 15573 / CFN 42).